A 207-amino-acid chain; its full sequence is Small ribosomal subunit protein uS4c (207 aa).

The S4 RNA-binding domain maps to 92–153 (MRLDNILFRL…PKIYQSIITK (62 aa)).

Belongs to the universal ribosomal protein uS4 family. Part of the 30S ribosomal subunit. Contacts protein S5. The interaction surface between S4 and S5 is involved in control of translational fidelity.

It is found in the plastid. The protein localises to the chloroplast. One of the primary rRNA binding proteins, it binds directly to 16S rRNA where it nucleates assembly of the body of the 30S subunit. Its function is as follows. With S5 and S12 plays an important role in translational accuracy. The sequence is that of Small ribosomal subunit protein uS4c (rps4) from Equisetum bogotense (Horsetail).